The sequence spans 662 residues: 72 kDa type IV collagenase (662 aa).

The first 29 residues, 1-29, serve as a signal peptide directing secretion; that stretch reads MEARLVWGVLVGPLRVLCVLCCLLGHAIA. The propeptide at 30–109 is activation peptide; that stretch reads APSPIIKFPG…PRCGNPDVAN (80 aa). The Cysteine switch motif lies at 100–107; it reads PRCGNPDV. C102 serves as a coordination point for Zn(2+). Residues 110 to 221 form a collagenase-like 1 region; it reads YNFFPRKPKW…LWTLGEGQVV (112 aa). Positions 134 and 168 each coordinate Ca(2+). Positions 178 and 180 each coordinate Zn(2+). Positions 185 and 186 each coordinate Ca(2+). Residue H193 coordinates Zn(2+). The Ca(2+) site is built by G200, G202, and D204. H206 contacts Zn(2+). The Ca(2+) site is built by D208, D209, and E211. A collagen-binding region spans residues 222-396; the sequence is RVKYGNADGE…WGFCPDQGYS (175 aa). Fibronectin type-II domains lie at 228–276, 286–334, and 344–392; these read ADGE…FCPH, GDGQ…FCPE, and SEGA…FCPD. Disulfide bonds link C233/C259, C247/C274, C291/C317, C305/C332, C349/C375, and C363/C390. The segment at 397–467 is collagenase-like 2; the sequence is LFLVAAHEFG…GPTPTLGPVT (71 aa). Position 403 (H403) interacts with Zn(2+). Residue E404 is part of the active site. The Zn(2+) site is built by H407 and H413. Residues 414 to 662 are required for inhibitor TIMP2 binding; sequence SQDPGALMAP…GSIKSDWLGC (249 aa). C471 and C662 are oxidised to a cystine. Hemopexin repeat units lie at residues 474 to 518, 519 to 565, 567 to 615, and 616 to 662; these read DIVF…WPEL, PEKI…GLPP, VQQV…WNAI, and PDNL…WLGC. Ca(2+) is bound by residues D478, D523, and D571. A glycan (N-linked (GlcNAc...) asparagine) is linked at N575. D620 provides a ligand contact to Ca(2+). N-linked (GlcNAc...) asparagine glycosylation occurs at N644.

The protein belongs to the peptidase M10A family. As to quaternary structure, interacts (via the C-terminal hemopexin-like domains-containing region) with the integrin alpha-V/beta-3; the interaction promotes vascular invasion in angiogenic vessels and melamoma cells. Interacts (via the C-terminal PEX domain) with TIMP2 (via the C-terminal); the interaction inhibits the degradation activity. Interacts with GSK3B. The cofactor is Ca(2+). Zn(2+) serves as cofactor. In terms of processing, phosphorylation on multiple sites modulates enzymatic activity. Phosphorylated by PKC in vitro. Post-translationally, the propeptide is processed by MMP14 (MT-MMP1) and MMP16 (MT-MMP3). Autocatalytic cleavage in the C-terminal produces the anti-angiogenic peptide, PEX. This processing appears to be facilitated by binding integrin integrinv/beta3.

It is found in the secreted. The protein localises to the extracellular space. The protein resides in the extracellular matrix. It localises to the membrane. Its subcellular location is the nucleus. It carries out the reaction Cleavage of gelatin type I and collagen types IV, V, VII, X. Cleaves the collagen-like sequence Pro-Gln-Gly-|-Ile-Ala-Gly-Gln.. Ubiquitinous metalloproteinase that is involved in diverse functions such as remodeling of the vasculature, angiogenesis, tissue repair, tumor invasion, inflammation, and atherosclerotic plaque rupture. As well as degrading extracellular matrix proteins, can also act on several nonmatrix proteins such as big endothelial 1 and beta-type CGRP promoting vasoconstriction. Also cleaves KISS at a Gly-|-Leu bond. Appears to have a role in myocardial cell death pathways. Contributes to myocardial oxidative stress by regulating the activity of GSK3beta. Cleaves GSK3beta in vitro. Involved in the formation of the fibrovascular tissues. Its function is as follows. PEX, the C-terminal non-catalytic fragment of MMP2, possesses anti-angiogenic and anti-tumor properties and inhibits cell migration and cell adhesion to FGF2 and vitronectin. Ligand for integrin alpha-v/beta3 on the surface of blood vessels. The polypeptide is 72 kDa type IV collagenase (Mmp2) (Rattus norvegicus (Rat)).